The chain runs to 238 residues: Female-specific protein 800 (238 aa).

Residues 35–50 (YSYHHTYNNNNQGNYQ) show a composition bias toward low complexity. Disordered regions lie at residues 35–112 (YSYH…KGGS) and 166–204 (NKRKITKSEKNGRYIKKDHMNNRDSNTNINEKPEYSKSP). Over residues 97–106 (RNDQIQSRGN) the composition is skewed to polar residues. The span at 171-187 (TKSEKNGRYIKKDHMNN) shows a compositional bias: basic and acidic residues.

Functionally, FS800 is likely to have some function in the production or maintenance of the schistosome egg. In Schistosoma mansoni (Blood fluke), this protein is Female-specific protein 800.